We begin with the raw amino-acid sequence, 145 residues long: uncharacterized protein (145 aa).

The dksA C4-type zinc-finger motif lies at 86-110; the sequence is CERCGEEIPEPRLCAIPWTRYCAKC.

This is an uncharacterized protein from Aquifex aeolicus (strain VF5).